Consider the following 258-residue polypeptide: uncharacterized protein (258 aa).

Helical transmembrane passes span 21–41 (LIWLPIAMMIVGLTQPLTIYY), 73–93 (LSQFNTLGMALVIFSVMGSVA), 119–139 (WLIQSVIGIMSFAAGYGLAYY), 153–173 (FAASLGLYALWVIFIVTAGLA), 182–202 (GAAAACGIGLTAAVSFAVSLF), and 229–249 (FFGWSLTFSILCIMLLAVFSV).

The protein localises to the cell membrane. This is an uncharacterized protein from Bacillus subtilis (strain 168).